The chain runs to 378 residues: UPF0754 membrane protein BcerKBAB4_0766 (378 aa).

A run of 2 helical transmembrane segments spans residues 1–21 and 357–377; these read MNIW…GGYT and YLGA…LLFL.

The protein belongs to the UPF0754 family.

Its subcellular location is the cell membrane. The protein is UPF0754 membrane protein BcerKBAB4_0766 of Bacillus mycoides (strain KBAB4) (Bacillus weihenstephanensis).